A 183-amino-acid chain; its full sequence is MTATAQQLEYLKNSIKSIQDYPKPGILFRDVTSLLEDPKAYALSIDLLVERYKNAGINKVVGTEARGFLFGAPVALGLGVGFVPVRKPGKLPRETISETYDLEYGTDQLEIHVDAIKPGDKVLVVDDLLATGGTIEATVKLIRRLGGEVADAAFIINLFDLGGEQRLEKQGITSYSLVPFPGH.

The protein belongs to the purine/pyrimidine phosphoribosyltransferase family. As to quaternary structure, homodimer.

Its subcellular location is the cytoplasm. It catalyses the reaction AMP + diphosphate = 5-phospho-alpha-D-ribose 1-diphosphate + adenine. It functions in the pathway purine metabolism; AMP biosynthesis via salvage pathway; AMP from adenine: step 1/1. Functionally, catalyzes a salvage reaction resulting in the formation of AMP, that is energically less costly than de novo synthesis. This is Adenine phosphoribosyltransferase from Escherichia coli O157:H7.